The primary structure comprises 1064 residues: Lysine-specific demethylase 4A (1064 aa).

An N-acetylalanine modification is found at Ala-2. Residues Ile-14–Arg-56 form the JmjN domain. Residue Tyr-132 participates in 2-oxoglutarate binding. Positions Glu-142–Cys-308 constitute a JmjC domain. Fe cation-binding residues include His-188 and Glu-190. The 2-oxoglutarate site is built by Asn-198 and Lys-206. Positions 234 and 240 each coordinate Zn(2+). Position 241 (Lys-241) interacts with 2-oxoglutarate. Fe cation is bound at residue His-276. Zn(2+) contacts are provided by Cys-306 and Cys-308. Disordered regions lie at residues Glu-358–Asp-384, Phe-501–Gly-537, and Ser-616–Gln-642. Over residues Glu-366–Glu-382 the composition is skewed to acidic residues. Residues Ser-509 to Ser-532 are compositionally biased toward low complexity. Ser-523 carries the phosphoserine modification. The tract at residues Arg-597–Lys-638 is interaction with NCOR1. A compositionally biased stretch (acidic residues) spans Ser-616 to Glu-634. Residues Met-709–Ser-767 form a PHD-type 1 zinc finger. The segment at Glu-772 to Ala-805 adopts a C2HC pre-PHD-type zinc-finger fold. A PHD-type 2 zinc finger spans residues Leu-828–Lys-885. Tudor domains are found at residues Gln-897–Phe-954 and Gly-955–Pro-1011.

The protein belongs to the JHDM3 histone demethylase family. In terms of assembly, interacts with histone deacetylase proteins HDAC1, HDAC2 and HDAC3. Interacts with RB and NCOR1. Interacts with VRK1. The cofactor is Fe(2+). Post-translationally, ubiquitinated by RNF8 and RNF168, leading to its degradation. Degradation promotes accessibility of H4K20me2 mark for DNA repair protein TP53BP1, which is then recruited. Also ubiquitinated by the SCF(FBXO22) complex; leading to proteasomal degradation.

It localises to the nucleus. It catalyses the reaction N(6),N(6),N(6)-trimethyl-L-lysyl(9)-[histone H3] + 2 2-oxoglutarate + 2 O2 = N(6)-methyl-L-lysyl(9)-[histone H3] + 2 formaldehyde + 2 succinate + 2 CO2. It carries out the reaction N(6),N(6),N(6)-trimethyl-L-lysyl(36)-[histone H3] + 2 2-oxoglutarate + 2 O2 = N(6)-methyl-L-lysyl(36)-[histone H3] + 2 formaldehyde + 2 succinate + 2 CO2. Its function is as follows. Histone demethylase that specifically demethylates 'Lys-9' and 'Lys-36' residues of histone H3, thereby playing a central role in histone code. Does not demethylate histone H3 'Lys-4', H3 'Lys-27' nor H4 'Lys-20'. Demethylates trimethylated H3 'Lys-9' and H3 'Lys-36' residue, while it has no activity on mono- and dimethylated residues. Demethylation of Lys residue generates formaldehyde and succinate. Participates in transcriptional repression of ASCL2 and E2F-responsive promoters via the recruitment of histone deacetylases and NCOR1, respectively. The polypeptide is Lysine-specific demethylase 4A (KDM4A) (Pongo abelii (Sumatran orangutan)).